A 417-amino-acid chain; its full sequence is MSSKYPRSVRCCLPLCALTLEAALTLLFYFFTHYDASLEDQKGLVASYQVGQDLTVMAAIGFGFLTSSFRGHSWSSVAFNLFMLALGVQWAILLDGFLSQFPPGKVVITLFSIRLATMSALSVLISAGAVLGYVNLVQLVVMVLVEVTALGTMRMVISNIFNTDYHMNMMHIYVFAACFGLSVAWCLPKPLAKGTEDKDQTATIPSLSAMLGALFLWMFWPSFNSALLRSPIERKNAVFNTYYAVAVSVVTAISVSSLAHPQGKINMTYMHNAVLAGGVAVATSCHLIPSPWLAMVLGLVAGLISIGGAKCLPGCCNRVLGIHDSSVMHYNFSLLGLLGEIIYIVLLVLDTVGAGNGMVGFQVLVSIGELSLAIVIALTSGLLTGLLLNLKIWKAPHAAKYFDDQVFWKFPHLAVGF.

Helical transmembrane passes span 12–32, 44–64, 77–97, 125–145, 172–192, 203–223, 238–258, 265–285, 287–307, 331–351, and 358–378; these read CLPL…YFFT, LVAS…GFGF, VAFN…LDGF, ISAG…MVLV, IYVF…KPLA, TIPS…WPSF, VFNT…VSSL, INMT…ATSC, LIPS…ISIG, NFSL…VLDT, and MVGF…VIAL.

This sequence belongs to the ammonium transporter (TC 2.A.49) family. Rh subfamily.

It localises to the membrane. In terms of biological role, may be part of an oligomeric complex which is likely to have a transport or channel function in the erythrocyte membrane. In Gorilla gorilla gorilla (Western lowland gorilla), this protein is RH-like protein ID.